We begin with the raw amino-acid sequence, 246 residues long: MAEQEQRKIPLVPENLLKKRKAYQALKATQAEQALLAKKEQRKGKGLRFKRLESFLHDSWRQKRDMVRLRRLEMKPHALELPDKHSLAFVVRIERIDGVSLLVQRTIARLRLKKIFSGVFVKVTPQNLKMLRIVEPYVTWGFPNLKSVRELILKRGQAKVKNKTIPLTDNTVIEEHLGKFGVICLEDLIHEIAFPGKHFQEISWFLRPFHLSVARHATKNRVGFLKEMGTPGYRGERINQLIRQLN.

Ser-54 is modified (phosphoserine).

The protein belongs to the universal ribosomal protein uL30 family.

This Pongo abelii (Sumatran orangutan) protein is Large ribosomal subunit protein uL30-like 1 (RPL7L1).